The following is a 306-amino-acid chain: 3-methyl-2-oxobutanoate hydroxymethyltransferase (306 aa).

The Mg(2+) site is built by Asp53 and Asp96. Residues 53 to 54 (DS), Asp96, and Lys126 each bind 3-methyl-2-oxobutanoate. Glu128 lines the Mg(2+) pocket. The Proton acceptor role is filled by Glu195.

This sequence belongs to the PanB family. Homodecamer; pentamer of dimers. Requires Mg(2+) as cofactor.

It localises to the cytoplasm. The catalysed reaction is 3-methyl-2-oxobutanoate + (6R)-5,10-methylene-5,6,7,8-tetrahydrofolate + H2O = 2-dehydropantoate + (6S)-5,6,7,8-tetrahydrofolate. It participates in cofactor biosynthesis; (R)-pantothenate biosynthesis; (R)-pantoate from 3-methyl-2-oxobutanoate: step 1/2. Catalyzes the reversible reaction in which hydroxymethyl group from 5,10-methylenetetrahydrofolate is transferred onto alpha-ketoisovalerate to form ketopantoate. The sequence is that of 3-methyl-2-oxobutanoate hydroxymethyltransferase from Anaeromyxobacter dehalogenans (strain 2CP-1 / ATCC BAA-258).